The sequence spans 342 residues: Large ribosomal subunit protein uL10 (342 aa).

The segment at 212-342 (EYIDMLQKAY…ALAGLSALFG (131 aa)) is required for interaction with ribosomal protein L12 dimers. Residues 299–308 (QAQVAVATQP) are compositionally biased toward polar residues. Residues 299–342 (QAQVAVATQPSEEEKKEEEKTEEEEKEEEASEEEALAGLSALFG) form a disordered region. Residues 318–333 (KTEEEEKEEEASEEEA) are compositionally biased toward acidic residues.

The protein belongs to the universal ribosomal protein uL10 family. As to quaternary structure, part of the 50S ribosomal subunit, binds large rRNA. Forms the ribosomal stalk which helps the ribosome interact with GTP-bound translation factors. Forms a heptameric L10(L12)2(L12)2(L12)2 complex, where L10 forms an elongated spine to which the L12 dimers bind in a sequential fashion.

In terms of biological role, forms the large subunit's ribosomal stalk, playing a central role in the interaction of the ribosome with elongation factors; the stalk complex of P.horikoshii binds to E.coli large subunits and confers on them the ability to interact with eukaryotic elongation factors. Each succesive L12 dimer bound along the P0 spine increases the GTPase activity of elongation factors and increases translation by reconsituted ribosomes, although the first site is the most stimulatory. This chain is Large ribosomal subunit protein uL10, found in Pyrococcus horikoshii (strain ATCC 700860 / DSM 12428 / JCM 9974 / NBRC 100139 / OT-3).